Consider the following 812-residue polypeptide: Glycerol-3-phosphate acyltransferase (812 aa).

The short motif at cysteine 308–methionine 313 is the HXXXXD motif element.

The protein belongs to the GPAT/DAPAT family.

The protein resides in the cell inner membrane. It carries out the reaction sn-glycerol 3-phosphate + an acyl-CoA = a 1-acyl-sn-glycero-3-phosphate + CoA. Its pathway is phospholipid metabolism; CDP-diacylglycerol biosynthesis; CDP-diacylglycerol from sn-glycerol 3-phosphate: step 1/3. This chain is Glycerol-3-phosphate acyltransferase, found in Pseudoalteromonas translucida (strain TAC 125).